Consider the following 95-residue polypeptide: Co-chaperonin GroES (95 aa).

It belongs to the GroES chaperonin family. In terms of assembly, heptamer of 7 subunits arranged in a ring. Interacts with the chaperonin GroEL.

The protein resides in the cytoplasm. Together with the chaperonin GroEL, plays an essential role in assisting protein folding. The GroEL-GroES system forms a nano-cage that allows encapsulation of the non-native substrate proteins and provides a physical environment optimized to promote and accelerate protein folding. GroES binds to the apical surface of the GroEL ring, thereby capping the opening of the GroEL channel. This is Co-chaperonin GroES from Chlorobaculum tepidum (strain ATCC 49652 / DSM 12025 / NBRC 103806 / TLS) (Chlorobium tepidum).